A 680-amino-acid chain; its full sequence is Protein FAR1-RELATED SEQUENCE 11 (680 aa).

Positions 1 to 36 (MSDDPGQMLLIYDDPSDQRSLSLDDASSTEESPDDN) are disordered. Residues 62 to 156 (EFYSTFAKRC…ANHHNHELLE (95 aa)) form the FAR1 domain. The MULE domain occupies 277 to 373 (AVVFDTTHRL…CIWMVVGKFP (97 aa)). The SWIM-type zinc-finger motif lies at 556–589 (YWVPQEGIISCSCQLFEFSGFLCRHALRVLSTGN).

It belongs to the FHY3/FAR1 family. Expressed in hypocotyls, rosette and cauline leaves, inflorescences stems, flowers and siliques.

It localises to the nucleus. Functionally, putative transcription activator involved in regulating light control of development. The protein is Protein FAR1-RELATED SEQUENCE 11 (FRS11) of Arabidopsis thaliana (Mouse-ear cress).